We begin with the raw amino-acid sequence, 413 residues long: Multidrug resistance protein MdtA (413 aa).

Residues 1–20 (MKGSNTFRWAIAIGVVVAAA) form the signal peptide. 2 disordered regions span residues 31 to 57 (SPTA…RDGP) and 391 to 413 (EPQT…GARA). Over residues 32-49 (PTAAPGVAAQAQHTAAAG) the composition is skewed to low complexity. Residues 397–413 (ADEKSPSRHEGQKGARA) show a composition bias toward basic and acidic residues.

Belongs to the membrane fusion protein (MFP) (TC 8.A.1) family. In terms of assembly, part of a tripartite efflux system composed of MdtA, MdtB and MdtC.

The protein localises to the cell inner membrane. This Salmonella typhi protein is Multidrug resistance protein MdtA.